Here is a 602-residue protein sequence, read N- to C-terminus: Probable translation initiation factor IF-2 (602 aa).

The region spanning 10–227 (LRQPIVVVLG…LLAGLTQNYM (218 aa)) is the tr-type G domain. The tract at residues 19–26 (GHVDHGKT) is G1. 19–26 (GHVDHGKT) contributes to the GTP binding site. The G2 stretch occupies residues 44-48 (EMTQE). The tract at residues 83 to 86 (DTPG) is G3. GTP contacts are provided by residues 83-87 (DTPGH) and 137-140 (NKID). The G4 stretch occupies residues 137–140 (NKID). Residues 205 to 207 (SAK) form a G5 region.

This sequence belongs to the TRAFAC class translation factor GTPase superfamily. Classic translation factor GTPase family. IF-2 subfamily.

Functionally, function in general translation initiation by promoting the binding of the formylmethionine-tRNA to ribosomes. Seems to function along with eIF-2. The sequence is that of Probable translation initiation factor IF-2 from Sulfurisphaera tokodaii (strain DSM 16993 / JCM 10545 / NBRC 100140 / 7) (Sulfolobus tokodaii).